The sequence spans 183 residues: NADH-quinone oxidoreductase subunit B (183 aa).

Positions 60, 61, 125, and 154 each coordinate [4Fe-4S] cluster.

Belongs to the complex I 20 kDa subunit family. NDH-1 is composed of 14 different subunits. Subunits NuoB, C, D, E, F, and G constitute the peripheral sector of the complex. [4Fe-4S] cluster is required as a cofactor.

The protein localises to the cell inner membrane. The catalysed reaction is a quinone + NADH + 5 H(+)(in) = a quinol + NAD(+) + 4 H(+)(out). In terms of biological role, NDH-1 shuttles electrons from NADH, via FMN and iron-sulfur (Fe-S) centers, to quinones in the respiratory chain. The immediate electron acceptor for the enzyme in this species is believed to be ubiquinone. Couples the redox reaction to proton translocation (for every two electrons transferred, four hydrogen ions are translocated across the cytoplasmic membrane), and thus conserves the redox energy in a proton gradient. The polypeptide is NADH-quinone oxidoreductase subunit B (Desulfovibrio desulfuricans (strain ATCC 27774 / DSM 6949 / MB)).